We begin with the raw amino-acid sequence, 485 residues long: Glutamyl-tRNA(Gln) amidotransferase subunit A 1 (485 aa).

Active-site charge relay system residues include Lys79 and Ser154. Ser178 acts as the Acyl-ester intermediate in catalysis.

Belongs to the amidase family. GatA subfamily. In terms of assembly, heterotrimer of A, B and C subunits.

The catalysed reaction is L-glutamyl-tRNA(Gln) + L-glutamine + ATP + H2O = L-glutaminyl-tRNA(Gln) + L-glutamate + ADP + phosphate + H(+). In terms of biological role, allows the formation of correctly charged Gln-tRNA(Gln) through the transamidation of misacylated Glu-tRNA(Gln) in organisms which lack glutaminyl-tRNA synthetase. The reaction takes place in the presence of glutamine and ATP through an activated gamma-phospho-Glu-tRNA(Gln). The polypeptide is Glutamyl-tRNA(Gln) amidotransferase subunit A 1 (gatA1) (Clostridium acetobutylicum (strain ATCC 824 / DSM 792 / JCM 1419 / IAM 19013 / LMG 5710 / NBRC 13948 / NRRL B-527 / VKM B-1787 / 2291 / W)).